Reading from the N-terminus, the 358-residue chain is Dihydroorotate dehydrogenase (quinone) (358 aa).

FMN-binding positions include 61 to 65 (AGFDK) and glycine 85. Lysine 65 lines the substrate pocket. 110-114 (NRFGL) is a binding site for substrate. FMN is bound by residues asparagine 139 and asparagine 170. Residue asparagine 170 participates in substrate binding. The active-site Nucleophile is serine 173. Substrate is bound at residue asparagine 175. Residues lysine 211 and serine 239 each contribute to the FMN site. 240–241 (NT) serves as a coordination point for substrate. Residues glycine 263, glycine 292, and 313-314 (YS) each bind FMN.

The protein belongs to the dihydroorotate dehydrogenase family. Type 2 subfamily. Monomer. It depends on FMN as a cofactor.

The protein resides in the cell membrane. The enzyme catalyses (S)-dihydroorotate + a quinone = orotate + a quinol. Its pathway is pyrimidine metabolism; UMP biosynthesis via de novo pathway; orotate from (S)-dihydroorotate (quinone route): step 1/1. Catalyzes the conversion of dihydroorotate to orotate with quinone as electron acceptor. The protein is Dihydroorotate dehydrogenase (quinone) of Methylorubrum extorquens (strain CM4 / NCIMB 13688) (Methylobacterium extorquens).